Here is a 74-residue protein sequence, read N- to C-terminus: Cytochrome b (74 aa).

A helical transmembrane segment spans residues 34–54; sequence FGSLLAICLVTQILTGLLLAM.

The protein belongs to the cytochrome b family. In terms of assembly, the cytochrome bc1 complex contains 11 subunits: 3 respiratory subunits (MT-CYB, CYC1 and UQCRFS1), 2 core proteins (UQCRC1 and UQCRC2) and 6 low-molecular weight proteins (UQCRH/QCR6, UQCRB/QCR7, UQCRQ/QCR8, UQCR10/QCR9, UQCR11/QCR10 and a cleavage product of UQCRFS1). This cytochrome bc1 complex then forms a dimer. The cofactor is heme.

It localises to the mitochondrion inner membrane. In terms of biological role, component of the ubiquinol-cytochrome c reductase complex (complex III or cytochrome b-c1 complex) that is part of the mitochondrial respiratory chain. The b-c1 complex mediates electron transfer from ubiquinol to cytochrome c. Contributes to the generation of a proton gradient across the mitochondrial membrane that is then used for ATP synthesis. The polypeptide is Cytochrome b (MT-CYB) (Anser caerulescens (Snow goose)).